The chain runs to 31 residues: Cycloviolacin-O19 (31 aa).

The cyclopeptide (Gly-Asp) cross-link spans 1–31 (GTLPCGESCVWIPCISSVVGCSCKSKVCYKD). 3 disulfides stabilise this stretch: C5–C21, C9–C23, and C14–C28.

Post-translationally, this is a cyclic peptide. As to expression, expressed in petioles and runners but not in leaves, petals and roots (at protein level).

In terms of biological role, probably participates in a plant defense mechanism. This Viola odorata (Sweet violet) protein is Cycloviolacin-O19.